Here is a 92-residue protein sequence, read N- to C-terminus: Phospholemman (92 aa).

The first 20 residues, Met-1–Ala-20, serve as a signal peptide directing secretion. At Ala-22–Ser-35 the chain is on the extracellular side. The chain crosses the membrane as a helical span at residues Leu-36–Leu-56. Topologically, residues Lys-57 to Arg-92 are cytoplasmic. A disordered region spans residues Ala-67–Arg-92. Thr-79 bears the Phosphothreonine mark. Ser-82 bears the Phosphoserine mark. At Ser-83 the chain carries Phosphoserine; by PKA and PKC. The segment covering Ser-83 to Arg-92 has biased composition (basic residues). Residue Ser-88 is modified to Phosphoserine; by PKA. Thr-89 carries the phosphothreonine; by PKC modification.

The protein belongs to the FXYD family. In terms of assembly, homotetramer. Monomer. Regulatory subunit of the sodium/potassium-transporting ATPase (NKA) which is composed of a catalytic alpha subunit, a non-catalytic beta subunit and an additional regulatory subunit. The monomeric form associates with NKA while the oligomeric form does not. Interacts with the catalytic alpha-1 subunit ATP1A1. Also interacts with the catalytic alpha-2 and alpha-3 subunits ATP1A2 and ATP1A3. Very little interaction with ATP1A1, ATP1A2 or ATP1A3 when phosphorylated at Ser-83. Interacts with the non-catalytic beta-1 subunit ATP1B1. Oxidative stress decreases interaction with ATP1A1 but increases interaction with ATP1B1. Post-translationally, major plasma membrane substrate for cAMP-dependent protein kinase (PKA) and protein kinase C (PKC) in several different tissues. Phosphorylated in response to insulin and adrenergic stimulation. Phosphorylation at Ser-88 stimulates sodium/potassium-transporting ATPase activity while the unphosphorylated form inhibits sodium/potassium-transporting ATPase activity. Phosphorylation increases tetramerization, decreases binding to ATP1A1 and reduces inhibition of ATP1A1 activity. Phosphorylation at Ser-83 leads to greatly reduced interaction with ATP1A1, ATP1A2 and ATP1A3. May be phosphorylated by DMPK. Palmitoylation increases half-life and stability and is enhanced upon phosphorylation at Ser-88 by PKA. In terms of processing, glutathionylated. Expressed in ventricular myocytes (at protein level).

The protein resides in the cell membrane. The protein localises to the sarcolemma. It is found in the apical cell membrane. Its subcellular location is the membrane. It localises to the caveola. The protein resides in the T-tubule. Its function is as follows. Associates with and regulates the activity of the sodium/potassium-transporting ATPase (NKA) which transports Na(+) out of the cell and K(+) into the cell. Inhibits NKA activity in its unphosphorylated state and stimulates activity when phosphorylated. Reduces glutathionylation of the NKA beta-1 subunit ATP1B1, thus reversing glutathionylation-mediated inhibition of ATP1B1. Contributes to female sexual development by maintaining the excitability of neurons which secrete gonadotropin-releasing hormone. This is Phospholemman from Oryctolagus cuniculus (Rabbit).